A 213-amino-acid polypeptide reads, in one-letter code: Thymidylate kinase (213 aa).

An ATP-binding site is contributed by 9–16 (GVEGCGKT).

It belongs to the thymidylate kinase family.

The enzyme catalyses dTMP + ATP = dTDP + ADP. In terms of biological role, phosphorylation of dTMP to form dTDP in both de novo and salvage pathways of dTTP synthesis. In Geotalea uraniireducens (strain Rf4) (Geobacter uraniireducens), this protein is Thymidylate kinase.